The sequence spans 92 residues: UPF0250 protein COSY_0496 (92 aa).

This sequence belongs to the UPF0250 family.

In Vesicomyosocius okutanii subsp. Calyptogena okutanii (strain HA), this protein is UPF0250 protein COSY_0496.